Consider the following 579-residue polypeptide: UvrABC system protein C (579 aa).

Residues 12 to 89 (DATGVYIFRD…IKRYRPPYNV (78 aa)) enclose the GIY-YIG domain. Residues 193-228 (QEVIEVLEEEMKEASERLEFERAARIRDQIESIREV) enclose the UVR domain.

The protein belongs to the UvrC family. In terms of assembly, interacts with UvrB in an incision complex.

It localises to the cytoplasm. Functionally, the UvrABC repair system catalyzes the recognition and processing of DNA lesions. UvrC both incises the 5' and 3' sides of the lesion. The N-terminal half is responsible for the 3' incision and the C-terminal half is responsible for the 5' incision. In Methanothermobacter thermautotrophicus (strain ATCC 29096 / DSM 1053 / JCM 10044 / NBRC 100330 / Delta H) (Methanobacterium thermoautotrophicum), this protein is UvrABC system protein C.